The following is a 229-amino-acid chain: LexA repressor (229 aa).

The H-T-H motif DNA-binding region spans 26 to 46 (FDEMKEALDLASKSGIHRLIT). Residues S149 and K187 each act as for autocatalytic cleavage activity in the active site.

The protein belongs to the peptidase S24 family. As to quaternary structure, homodimer.

The catalysed reaction is Hydrolysis of Ala-|-Gly bond in repressor LexA.. Its function is as follows. Represses a number of genes involved in the response to DNA damage (SOS response), including recA and lexA. In the presence of single-stranded DNA, RecA interacts with LexA causing an autocatalytic cleavage which disrupts the DNA-binding part of LexA, leading to derepression of the SOS regulon and eventually DNA repair. In Phenylobacterium zucineum (strain HLK1), this protein is LexA repressor.